The primary structure comprises 809 residues: G-type lectin S-receptor-like serine/threonine-protein kinase At1g61480 (809 aa).

The N-terminal stretch at M1–A24 is a signal peptide. Residues G25 to F144 enclose the Bulb-type lectin domain. Residues G25–K425 lie on the Extracellular side of the membrane. Residues N53, N88, N94, N103, N117, N134, and N236 are each glycosylated (N-linked (GlcNAc...) asparagine). The EGF-like domain maps to P278–E314. 2 disulfide bridges follow: C282/C294 and C288/C302. Residues N320 and N375 are each glycosylated (N-linked (GlcNAc...) asparagine). The 83-residue stretch at C333–S415 folds into the PAN domain. Intrachain disulfides connect C368-C389 and C372-C378. The chain crosses the membrane as a helical span at residues I426–C446. The Cytoplasmic segment spans residues F447–R809. The Protein kinase domain occupies F496–F781. ATP is bound by residues L502–V510 and K524. Phosphoserine is present on residues S530 and S545. Residues R585–I602 form a caM-binding region. D621 serves as the catalytic Proton acceptor. S625 and S638 each carry phosphoserine. T655 carries the phosphothreonine modification. Residues S698 and S792 each carry the phosphoserine modification.

Belongs to the protein kinase superfamily. Ser/Thr protein kinase family.

It localises to the cell membrane. It carries out the reaction L-seryl-[protein] + ATP = O-phospho-L-seryl-[protein] + ADP + H(+). The catalysed reaction is L-threonyl-[protein] + ATP = O-phospho-L-threonyl-[protein] + ADP + H(+). This chain is G-type lectin S-receptor-like serine/threonine-protein kinase At1g61480, found in Arabidopsis thaliana (Mouse-ear cress).